Consider the following 607-residue polypeptide: Elongation factor 4 (607 aa).

The tr-type G domain occupies 6 to 188 (DRIRNFSIIA…AIVARIPAPK (183 aa)). GTP contacts are provided by residues 18 to 23 (DHGKST) and 135 to 138 (NKID).

Belongs to the TRAFAC class translation factor GTPase superfamily. Classic translation factor GTPase family. LepA subfamily.

The protein localises to the cell inner membrane. It carries out the reaction GTP + H2O = GDP + phosphate + H(+). Functionally, required for accurate and efficient protein synthesis under certain stress conditions. May act as a fidelity factor of the translation reaction, by catalyzing a one-codon backward translocation of tRNAs on improperly translocated ribosomes. Back-translocation proceeds from a post-translocation (POST) complex to a pre-translocation (PRE) complex, thus giving elongation factor G a second chance to translocate the tRNAs correctly. Binds to ribosomes in a GTP-dependent manner. The protein is Elongation factor 4 of Rhizorhabdus wittichii (strain DSM 6014 / CCUG 31198 / JCM 15750 / NBRC 105917 / EY 4224 / RW1) (Sphingomonas wittichii).